A 564-amino-acid polypeptide reads, in one-letter code: MALLAAATLNPTTHLSLRSRAGRNSENLWLRSAASSQKSKGRFCNLTVRAGTPSKPAEPIGPVFTKLKPWQIPKRDWFDKDFLFGASTSAYQIEGAWNEDGKGPSTWDHFCHKYPERISDGTNGDVAADSYHLYEEDVKALKDMGMKVYRFSISWSRILPNGTGEVNQAGIDYYNKLINSLISHDIVPYVTIWHWDTPQALEDKYGGFLDPQIVDDYKQFAKLCFESFGDRVKNWFTFNEPHTYCCFSYGEGIHAPGRCSPGMDCAVPEGDSLREPYTAGHHILLAHAEAVEMFRTHYNMHGDSKIGMAFDVMGYEPYQDSFLDDQARERSIDYNLGWFLEPVVRGDYPFSMRSLIGDRLPVFTKEEQEKLASSCDIMGLNYYTSRFSKHVDISPDVTPKLNTDDAYASSETTGSDGNDIGPITGTYWIYMYPKGLTDLLLIMKEKYGNPPIFITENGIADVDGDETMPDPLDDWKRLDYLQRHISAVKDAIDQGADVRGHFTWGLIDNFEWGSGYSSRFGLVYIDKNDGFKRKLKKSAKWFSKFNAVPKHLLGTTKPTGQAPV.

A chloroplast-targeting transit peptide spans 1 to 50 (MALLAAATLNPTTHLSLRSRAGRNSENLWLRSAASSQKSKGRFCNLTVRA). A beta-D-glucoside-binding positions include Q92, H194, and 239–240 (NE). E240 (proton donor) is an active-site residue. A disulfide bond links C259 and C265. Residues Y383, E456, W504, 511–512 (EW), and F520 contribute to the a beta-D-glucoside site. E456 acts as the Nucleophile in catalysis.

It belongs to the glycosyl hydrolase 1 family. Homo- and heterohexamers. As to expression, expressed in young seedlings early after germination.

Its subcellular location is the plastid. It localises to the chloroplast. It catalyses the reaction Hydrolysis of terminal, non-reducing beta-D-glucosyl residues with release of beta-D-glucose.. The enzyme catalyses DIMBOA beta-D-glucoside + H2O = DIMBOA + D-glucose. The catalysed reaction is DIBOA beta-D-glucoside + H2O = DIBOA + D-glucose. Its function is as follows. Acts in defense of young plant parts against pests via the production of hydroxamic acids from hydroxamic acid glucosides. Enzymatic activity is highly correlated with plant growth. The preferred substrate is DIMBOA-beta-D-glucoside. The polypeptide is 4-hydroxy-7-methoxy-3-oxo-3,4-dihydro-2H-1,4-benzoxazin-2-yl glucoside beta-D-glucosidase 1d, chloroplastic (GLU1D) (Triticum aestivum (Wheat)).